Here is a 306-residue protein sequence, read N- to C-terminus: Mycothiol acetyltransferase (306 aa).

2 consecutive N-acetyltransferase domains span residues 5 to 157 (EIYE…EPAA) and 159 to 306 (ITIR…HKKL). 1D-myo-inositol 2-(L-cysteinylamino)-2-deoxy-alpha-D-glucopyranoside is bound at residue E36. 82–84 (MLV) is a binding site for acetyl-CoA. 1D-myo-inositol 2-(L-cysteinylamino)-2-deoxy-alpha-D-glucopyranoside is bound by residues D186, K227, and E238. Residue 242–244 (LGV) coordinates acetyl-CoA. Y276 is a 1D-myo-inositol 2-(L-cysteinylamino)-2-deoxy-alpha-D-glucopyranoside binding site. An acetyl-CoA-binding site is contributed by 281-286 (NVRAVR).

Belongs to the acetyltransferase family. MshD subfamily. As to quaternary structure, monomer.

It carries out the reaction 1D-myo-inositol 2-(L-cysteinylamino)-2-deoxy-alpha-D-glucopyranoside + acetyl-CoA = mycothiol + CoA + H(+). Its function is as follows. Catalyzes the transfer of acetyl from acetyl-CoA to desacetylmycothiol (Cys-GlcN-Ins) to form mycothiol. In Stackebrandtia nassauensis (strain DSM 44728 / CIP 108903 / NRRL B-16338 / NBRC 102104 / LLR-40K-21), this protein is Mycothiol acetyltransferase.